The following is a 915-amino-acid chain: Nitrate reductase [NADH] (915 aa).

A disordered region spans residues 1-102 (MAASVEPRQP…PRDEGTADAW (102 aa)). Low complexity predominate over residues 16–26 (APATAPTARAP). The span at 57-71 (AEEEEDDDDEDDEGH) shows a compositional bias: acidic residues. Positions 88–97 (PSTRDPRDEG) are enriched in basic and acidic residues. Cys-189 is a binding site for Mo-molybdopterin. Residues 538–613 (DKQFTMSEVR…LDTYRIGELI (76 aa)) form the Cytochrome b5 heme-binding domain. Heme is bound by residues His-573 and His-596. The region spanning 654–767 (REKVPCRLVD…KGPLGHVEYT (114 aa)) is the FAD-binding FR-type domain. FAD is bound by residues 706–709 (RAYT), 723–727 (LVKVY), Phe-728, Phe-735, 740–742 (LMT), Ser-791, and Thr-794.

The protein belongs to the nitrate reductase family. Homodimer. It depends on FAD as a cofactor. The cofactor is heme. Mo-molybdopterin serves as cofactor.

It catalyses the reaction nitrite + NAD(+) + H2O = nitrate + NADH + H(+). In terms of biological role, nitrate reductase is a key enzyme involved in the first step of nitrate assimilation in plants, fungi and bacteria. This chain is Nitrate reductase [NADH], found in Hordeum vulgare (Barley).